The sequence spans 87 residues: Small ribosomal subunit protein bS20 (87 aa).

Belongs to the bacterial ribosomal protein bS20 family.

Binds directly to 16S ribosomal RNA. The sequence is that of Small ribosomal subunit protein bS20 from Geobacter sulfurreducens (strain ATCC 51573 / DSM 12127 / PCA).